A 664-amino-acid chain; its full sequence is Zinc finger protein 800 (664 aa).

The segment at 69-91 (FECKLCRSLFRGLPNLITHKKFY) adopts a C2H2-type 1; degenerate zinc-finger fold. Lysine 132 participates in a covalent cross-link: Glycyl lysine isopeptide (Lys-Gly) (interchain with G-Cter in SUMO2). Composition is skewed to polar residues over residues 154–179 (IEVTESSSTPEQTEVQIQETSTEQSK) and 207–224 (SDEQPQESQADLETSDNS). A disordered region spans residues 154–224 (IEVTESSSTP…QADLETSDNS (71 aa)). The C2H2-type 2 zinc finger occupies 230-253 (LICCLCRKEFNSRRGVRRHIRKVH). Lysine 279 participates in a covalent cross-link: Glycyl lysine isopeptide (Lys-Gly) (interchain with G-Cter in SUMO2). Residues 287–310 (RSCPVCCKSFATKANVRRHFDEVH) form a C2H2-type 3 zinc finger. A Phosphoserine modification is found at serine 317. Threonine 319 carries the post-translational modification Phosphothreonine. Positions 328–349 (QPLFLDSISPKKSFKTRKQKSS) are disordered. A Phosphoserine modification is found at serine 336. Residues 339–348 (KSFKTRKQKS) show a composition bias toward basic residues. A C2H2-type 4 zinc finger spans residues 357–382 (TACKCLLCKRKYSSQIMLKRHMQIVH). The interval 388–476 (GTNSKREKGP…GGQQKTRKPK (89 aa)) is disordered. Lysine 392 participates in a covalent cross-link: Glycyl lysine isopeptide (Lys-Gly) (interchain with G-Cter in SUMO2). A Glycyl lysine isopeptide (Lys-Gly) (interchain with G-Cter in SUMO1); alternate cross-link involves residue lysine 409. Residue lysine 409 forms a Glycyl lysine isopeptide (Lys-Gly) (interchain with G-Cter in SUMO2); alternate linkage. Polar residues predominate over residues 416-436 (VESSPPSITHSPQNELKGTNH). 6 positions are modified to phosphoserine: serine 422, serine 426, serine 455, serine 457, serine 460, and serine 462. The segment covering 458 to 470 (PKSTSPSAAGGQQ) has biased composition (polar residues). Residue lysine 476 forms a Glycyl lysine isopeptide (Lys-Gly) (interchain with G-Cter in SUMO2) linkage. 2 consecutive C2H2-type zinc fingers follow at residues 486 to 508 (LYCKLCKRQFTSKQNLTKHIELH) and 519 to 542 (YKCPLCTYETRRKRDVIRHITVVH). Disordered regions lie at residues 574 to 599 (KRGPSRDEAKHSDSKHDGTSNSPSKK) and 635 to 664 (HHKKTHKANASNSPEGNKTKGRSTRSKALV). Residues 577 to 591 (PSRDEAKHSDSKHDG) show a composition bias toward basic and acidic residues. Lysine 599 is covalently cross-linked (Glycyl lysine isopeptide (Lys-Gly) (interchain with G-Cter in SUMO2)). The C2H2-type 7 zinc finger occupies 618–640 (HRCNKCGKAFAKKTYLEHHKKTH). The span at 653–664 (TKGRSTRSKALV) shows a compositional bias: basic residues.

This sequence belongs to the krueppel C2H2-type zinc-finger protein family.

It localises to the nucleus. In terms of biological role, may be involved in transcriptional regulation. The protein is Zinc finger protein 800 (ZNF800) of Homo sapiens (Human).